Reading from the N-terminus, the 479-residue chain is Aspartyl/glutamyl-tRNA(Asn/Gln) amidotransferase subunit B (479 aa).

The protein belongs to the GatB/GatE family. GatB subfamily. In terms of assembly, heterotrimer of A, B and C subunits.

It carries out the reaction L-glutamyl-tRNA(Gln) + L-glutamine + ATP + H2O = L-glutaminyl-tRNA(Gln) + L-glutamate + ADP + phosphate + H(+). It catalyses the reaction L-aspartyl-tRNA(Asn) + L-glutamine + ATP + H2O = L-asparaginyl-tRNA(Asn) + L-glutamate + ADP + phosphate + 2 H(+). Functionally, allows the formation of correctly charged Asn-tRNA(Asn) or Gln-tRNA(Gln) through the transamidation of misacylated Asp-tRNA(Asn) or Glu-tRNA(Gln) in organisms which lack either or both of asparaginyl-tRNA or glutaminyl-tRNA synthetases. The reaction takes place in the presence of glutamine and ATP through an activated phospho-Asp-tRNA(Asn) or phospho-Glu-tRNA(Gln). This Geotalea uraniireducens (strain Rf4) (Geobacter uraniireducens) protein is Aspartyl/glutamyl-tRNA(Asn/Gln) amidotransferase subunit B.